The sequence spans 357 residues: Alanine racemase (357 aa).

Lysine 34 (proton acceptor; specific for D-alanine) is an active-site residue. The residue at position 34 (lysine 34) is an N6-(pyridoxal phosphate)lysine. Substrate is bound at residue arginine 127. Catalysis depends on tyrosine 252, which acts as the Proton acceptor; specific for L-alanine. Methionine 301 is a substrate binding site.

This sequence belongs to the alanine racemase family. Pyridoxal 5'-phosphate is required as a cofactor.

It carries out the reaction L-alanine = D-alanine. Its pathway is amino-acid biosynthesis; D-alanine biosynthesis; D-alanine from L-alanine: step 1/1. Functionally, catalyzes the interconversion of L-alanine and D-alanine. May also act on other amino acids. The polypeptide is Alanine racemase (alr) (Dichelobacter nodosus (strain VCS1703A)).